Reading from the N-terminus, the 277-residue chain is Large ribosomal subunit protein uL2 (277 aa).

Disordered stretches follow at residues 24 to 55 (ITTSTPEKSLLRPLKKKAGRNNQGKLTVRHHG) and 221 to 277 (RGSV…RKKK).

The protein belongs to the universal ribosomal protein uL2 family. In terms of assembly, part of the 50S ribosomal subunit. Forms a bridge to the 30S subunit in the 70S ribosome.

One of the primary rRNA binding proteins. Required for association of the 30S and 50S subunits to form the 70S ribosome, for tRNA binding and peptide bond formation. It has been suggested to have peptidyltransferase activity; this is somewhat controversial. Makes several contacts with the 16S rRNA in the 70S ribosome. This Listeria innocua serovar 6a (strain ATCC BAA-680 / CLIP 11262) protein is Large ribosomal subunit protein uL2.